Reading from the N-terminus, the 434-residue chain is Gamma-glutamyl phosphate reductase (434 aa).

The protein belongs to the gamma-glutamyl phosphate reductase family.

It is found in the cytoplasm. The enzyme catalyses L-glutamate 5-semialdehyde + phosphate + NADP(+) = L-glutamyl 5-phosphate + NADPH + H(+). Its pathway is amino-acid biosynthesis; L-proline biosynthesis; L-glutamate 5-semialdehyde from L-glutamate: step 2/2. In terms of biological role, catalyzes the NADPH-dependent reduction of L-glutamate 5-phosphate into L-glutamate 5-semialdehyde and phosphate. The product spontaneously undergoes cyclization to form 1-pyrroline-5-carboxylate. The sequence is that of Gamma-glutamyl phosphate reductase from Nostoc sp. (strain PCC 7120 / SAG 25.82 / UTEX 2576).